A 112-amino-acid chain; its full sequence is Ribonuclease P protein component (112 aa).

Belongs to the RnpA family. Consists of a catalytic RNA component (M1 or rnpB) and a protein subunit.

The catalysed reaction is Endonucleolytic cleavage of RNA, removing 5'-extranucleotides from tRNA precursor.. RNaseP catalyzes the removal of the 5'-leader sequence from pre-tRNA to produce the mature 5'-terminus. It can also cleave other RNA substrates such as 4.5S RNA. The protein component plays an auxiliary but essential role in vivo by binding to the 5'-leader sequence and broadening the substrate specificity of the ribozyme. This chain is Ribonuclease P protein component, found in Mesomycoplasma hyopneumoniae (strain 7448) (Mycoplasma hyopneumoniae).